The primary structure comprises 352 residues: Glycerol-1-phosphate dehydrogenase [NAD(P)+] (352 aa).

NAD(+)-binding positions include 98–102 and 120–123; these read GKAID and TAAS. Aspartate 125 lines the substrate pocket. Serine 129 contributes to the NAD(+) binding site. Aspartate 172 provides a ligand contact to substrate. The Zn(2+) site is built by aspartate 172 and histidine 252. Position 256 (histidine 256) interacts with substrate. Zn(2+) is bound at residue histidine 268.

Belongs to the glycerol-1-phosphate dehydrogenase family. Zn(2+) is required as a cofactor.

Its subcellular location is the cytoplasm. It catalyses the reaction sn-glycerol 1-phosphate + NAD(+) = dihydroxyacetone phosphate + NADH + H(+). The enzyme catalyses sn-glycerol 1-phosphate + NADP(+) = dihydroxyacetone phosphate + NADPH + H(+). Its pathway is membrane lipid metabolism; glycerophospholipid metabolism. In terms of biological role, catalyzes the NAD(P)H-dependent reduction of dihydroxyacetonephosphate (DHAP or glycerone phosphate) to glycerol 1-phosphate (G1P). The G1P thus generated is used as the glycerophosphate backbone of phospholipids in the cellular membranes of Archaea. The chain is Glycerol-1-phosphate dehydrogenase [NAD(P)+] from Haloarcula marismortui (strain ATCC 43049 / DSM 3752 / JCM 8966 / VKM B-1809) (Halobacterium marismortui).